The sequence spans 194 residues: Peptidyl-tRNA hydrolase (194 aa).

Tyrosine 16 contributes to the tRNA binding site. Catalysis depends on histidine 21, which acts as the Proton acceptor. Residues phenylalanine 67, asparagine 69, and asparagine 115 each contribute to the tRNA site.

Belongs to the PTH family. As to quaternary structure, monomer.

The protein resides in the cytoplasm. It catalyses the reaction an N-acyl-L-alpha-aminoacyl-tRNA + H2O = an N-acyl-L-amino acid + a tRNA + H(+). Hydrolyzes ribosome-free peptidyl-tRNAs (with 1 or more amino acids incorporated), which drop off the ribosome during protein synthesis, or as a result of ribosome stalling. Its function is as follows. Catalyzes the release of premature peptidyl moieties from peptidyl-tRNA molecules trapped in stalled 50S ribosomal subunits, and thus maintains levels of free tRNAs and 50S ribosomes. The polypeptide is Peptidyl-tRNA hydrolase (Escherichia coli O17:K52:H18 (strain UMN026 / ExPEC)).